The sequence spans 211 residues: Arginine exporter protein ArgO (211 aa).

Residues 1 to 38 are Cytoplasmic-facing; sequence MFSYYFQGLALGAAMILPLGPQNAFVMNQGIRRQYHIM. The chain crosses the membrane as a helical span at residues 39 to 58; sequence IALLCAISDLVLICAGIFGG. The Periplasmic portion of the chain corresponds to 59–63; it reads SALLM. A helical membrane pass occupies residues 64–91; that stretch reads QSPWLLALVTWGGVAFLLWYGFGAFKTA. The Cytoplasmic segment spans residues 92–102; it reads MSSNIELASAE. A helical membrane pass occupies residues 103-130; sequence VMKQGRWKIIATMLAVTWLNPHVYLDTF. Over 131–140 the chain is Periplasmic; that stretch reads VVLGSLGGQL. A helical membrane pass occupies residues 141 to 170; the sequence is DVEPKRWFALGTISASFLWFFGLALLAAWL. Topologically, residues 171-173 are cytoplasmic; that stretch reads APR. A helical membrane pass occupies residues 174–200; sequence LRTAKAQRIINLVVGCVMWFIALQLAR. The Periplasmic segment spans residues 201–211; that stretch reads DGIAHAQALFS.

This sequence belongs to the LysE/ArgO transporter (TC 2.A.75) family. As to quaternary structure, monomer.

It is found in the cell inner membrane. It carries out the reaction L-arginine(in) = L-arginine(out). Functionally, involved in the export of arginine. Important to control the intracellular level of arginine and the correct balance between arginine and lysine. May also be involved in the export of canavanine (a plant-derived antimetabolite). This chain is Arginine exporter protein ArgO, found in Escherichia coli (strain K12).